Reading from the N-terminus, the 187-residue chain is Elongation factor P (187 aa).

It belongs to the elongation factor P family.

It is found in the cytoplasm. It participates in protein biosynthesis; polypeptide chain elongation. Functionally, involved in peptide bond synthesis. Stimulates efficient translation and peptide-bond synthesis on native or reconstituted 70S ribosomes in vitro. Probably functions indirectly by altering the affinity of the ribosome for aminoacyl-tRNA, thus increasing their reactivity as acceptors for peptidyl transferase. The sequence is that of Elongation factor P from Mycobacterium sp. (strain JLS).